The primary structure comprises 754 residues: MIKRWLSVNRKKSHPEKNTQGNDEINRKATSLKKTKGSGDPSIAKSPSAKSSTSSIPSNLASHERRSKFSSQTDNLAGNKHYHEHYHNMASTSDEREYDSSTTYEDRAFDTESSILFTTITDLMPYGDGSNKVFGYENFGNTCYCNSVLQCLYNIPEFRCNVLRYPERVAAVNRIRKSDLKGSKIRVFTNESFETSTNSGNSNTGYQSNDNEDAHNHHHLQQSDQDNSSSSTQEKQNNFERKRNSFMGFGKDKSNYKDSAKKDDNNEMERPQPVHTVVMASDTLTEKLHEGCKKIIVGRPLLKQSDSLSKASTTDCQANSHCQCDSQGSRITSVDDDVLVNPESCNDAVNNSNNNKENTFPTSEQRKKAALIRGPVLNVDHLLYPTEEATLYNGLKDIFESITENLSLTGIVSPTEFVKILKKENVLFNTMMQQDAHEFLNFLLNDFSEYIQRNNPRMRFGPQKTDNSNDNFITDLFKGTLTNRIKCLTCDNITSRDEPFLDFPIEVQGDEETDIQKMLKSYHQREMLNGVNKFYCNKCYGLQEAERMVGLKQLPHILSLHLKRFKYSEEQKSNIKLFNKILYPLTLDVSSTFNTSVYKKYELSGVVIHMGSGPQHGHYVCICRNEKFGWLLYDDETVESIKEETVLQFTGHPGDQTTAYVLFYKETQADKTENQNENIDTSSQDQMQTDNNIEQLIKCDDWLRDRKLRAAANIERKKTLGNIPEVKTAETKTPLNDKKRNKQKRKSRILSFIK.

A compositionally biased stretch (basic residues) spans 1–14 (MIKRWLSVNRKKSH). A disordered region spans residues 1–76 (MIKRWLSVNR…SKFSSQTDNL (76 aa)). Positions 42-58 (SIAKSPSAKSSTSSIPS) are enriched in low complexity. Positions 134–667 (FGYENFGNTC…TAYVLFYKET (534 aa)) constitute a USP domain. The Nucleophile role is filled by Cys143. Polar residues predominate over residues 194–209 (ETSTNSGNSNTGYQSN). Residues 194 to 273 (ETSTNSGNSN…DNNEMERPQP (80 aa)) are disordered. Residues 222 to 233 (QSDQDNSSSSTQ) are compositionally biased toward low complexity. Basic and acidic residues predominate over residues 250–272 (GKDKSNYKDSAKKDDNNEMERPQ). The Proton acceptor role is filled by His618. The disordered stretch occupies residues 726 to 754 (VKTAETKTPLNDKKRNKQKRKSRILSFIK). Basic and acidic residues predominate over residues 727–738 (KTAETKTPLNDK). Basic residues predominate over residues 739-748 (KRNKQKRKSR).

Belongs to the peptidase C19 family.

It catalyses the reaction Thiol-dependent hydrolysis of ester, thioester, amide, peptide and isopeptide bonds formed by the C-terminal Gly of ubiquitin (a 76-residue protein attached to proteins as an intracellular targeting signal).. The protein is Ubiquitin carboxyl-terminal hydrolase 9 (UBP9) of Saccharomyces cerevisiae (strain ATCC 204508 / S288c) (Baker's yeast).